The sequence spans 330 residues: GTP 3',8-cyclase (330 aa).

In terms of domain architecture, Radical SAM core spans 14–225; the sequence is RFGRTVDYVR…RERLADAYPE (212 aa). Residue arginine 23 participates in GTP binding. Cysteine 30 and cysteine 34 together coordinate [4Fe-4S] cluster. Tyrosine 36 serves as a coordination point for S-adenosyl-L-methionine. Cysteine 37 lines the [4Fe-4S] cluster pocket. Arginine 70 contacts GTP. Residue glycine 74 participates in S-adenosyl-L-methionine binding. Position 101 (threonine 101) interacts with GTP. Serine 125 is an S-adenosyl-L-methionine binding site. Residue lysine 162 participates in GTP binding. 2 residues coordinate [4Fe-4S] cluster: cysteine 259 and cysteine 262. 264 to 266 is a GTP binding site; that stretch reads KLR. Residue cysteine 276 participates in [4Fe-4S] cluster binding. Residues 309–318 show a composition bias toward basic and acidic residues; sequence KPKDGLKSSH. Residues 309-330 form a disordered region; it reads KPKDGLKSSHDTAASSMSQIGG. Positions 319-330 are enriched in polar residues; that stretch reads DTAASSMSQIGG.

This sequence belongs to the radical SAM superfamily. MoaA family. As to quaternary structure, monomer and homodimer. It depends on [4Fe-4S] cluster as a cofactor.

It catalyses the reaction GTP + AH2 + S-adenosyl-L-methionine = (8S)-3',8-cyclo-7,8-dihydroguanosine 5'-triphosphate + 5'-deoxyadenosine + L-methionine + A + H(+). The protein operates within cofactor biosynthesis; molybdopterin biosynthesis. Functionally, catalyzes the cyclization of GTP to (8S)-3',8-cyclo-7,8-dihydroguanosine 5'-triphosphate. This chain is GTP 3',8-cyclase, found in Chlorobaculum tepidum (strain ATCC 49652 / DSM 12025 / NBRC 103806 / TLS) (Chlorobium tepidum).